The following is a 432-amino-acid chain: MQVSVETTQGLGRRVTITIAADSIETAVKSELVNVAKKVRIDGFRKGKVPMNIVAQRYGASVRQDVLGDLMSRNFIDAIIKEKINPAGAPTYVPGEYKLGEDFTYSVEFEVYPEVELQGLEAIEVEKPIVEVTDADVDGMLDTLRKQQATWKEKDGAVEAEDRVTIDFTGSVDSEEFEGGKASDFVLAMGQGRMIPGFEDGIKGHKAGEEFTIDVTFPEEYHAENLKGKAAKFAINLKKVEERELPELTAEFIKRFGVEDGSVEGLRAEVRKNMERELKSAIRNRVKSQAIEGLVKANDIDVPAALIDSEIDVLRRQAAQRFGGNEKQALELPRELFEEQAKRRVVVGLLLGEVIRTNELKADEERVKGLIEEMASAYEDPKEVIEFYSKNKELMDNMRNVALEEQAVEAVLAKAKVTEKETTFNELMNQQA.

The PPIase FKBP-type domain maps to 161–246 (EDRVTIDFTG…LKKVEERELP (86 aa)).

It belongs to the FKBP-type PPIase family. Tig subfamily. As to quaternary structure, homodimer and monomer. In vivo most of the ribosomes are in complex with monomeric TF. Uncomplexed TF, however, is in a monomer-dimer equilibrium with approximately two thirds of TF existing in a dimeric state.

Its subcellular location is the cytoplasm. The enzyme catalyses [protein]-peptidylproline (omega=180) = [protein]-peptidylproline (omega=0). Involved in protein export. Acts as a chaperone by maintaining the newly synthesized protein in an open conformation. Functions as a peptidyl-prolyl cis-trans isomerase. In Shigella boydii serotype 18 (strain CDC 3083-94 / BS512), this protein is Trigger factor.